The primary structure comprises 538 residues: Syncytin-2 (538 aa).

Positions 1 to 15 (MGLLLLVLILTPLLA) are cleaved as a signal peptide. Topologically, residues 31 to 478 (LLQSTGSPYS…GWLNWEGTWK (448 aa)) are extracellular. The CXXC signature appears at 43 to 46 (CWLC). 3 disulfides stabilise this stretch: cysteine 43/cysteine 46, cysteine 43/cysteine 439, and cysteine 431/cysteine 438. N-linked (GlcNAc...) asparagine glycans are attached at residues asparagine 133, asparagine 146, asparagine 177, asparagine 220, asparagine 241, asparagine 247, asparagine 312, and asparagine 332. A fusion peptide region spans residues 354–374 (FIPLLAGLGILAGTGTGIAGI). A CKS-17 motif is present at residues 414–430 (LQNRRGLDMLTAAQGGI). The CX6CC motif lies at 431–439 (CLALDEKCC). An N-linked (GlcNAc...) asparagine glycan is attached at asparagine 443. A helical membrane pass occupies residues 479–499 (WFSWVLPFIGPFVSLLLLLLF). Residues 500–538 (GPCLLNLITQFVSSRLQAIKLQTNLSAGRRPRTIQESPF) are Cytoplasmic-facing.

It belongs to the gamma type-C retroviral envelope protein family. HERV class-I FRD env subfamily. As to quaternary structure, the surface and transmembrane proteins form a heterodimer. They are attached by non-covalent interactions or by a labile interchain disulfide bond. Post-translationally, specific enzymatic cleavages in vivo yield the mature SU and TM proteins. In terms of processing, the CXXC motif is highly conserved across a broad range of retroviral envelope proteins. It is thought to participate in the formation of a labile disulfide bond possibly with the CX6CC motif present in the transmembrane protein.

It localises to the cell membrane. In terms of biological role, this endogenous retroviral envelope protein has retained its original fusogenic properties and participates in trophoblast fusion and the formation of a syncytium during placenta morphogenesis. The interaction with MFSD2A is apparently important for this process. Its function is as follows. Endogenous envelope proteins may have kept, lost or modified their original function during evolution and this one is unable to confer infectivity. This chain is Syncytin-2 (ERVFRD-1), found in Hylobates moloch (Silvery gibbon).